The chain runs to 58 residues: Teratocyte protein CftICK-III (58 aa).

A signal peptide spans 1–24; it reads MQKFMRLFFLGLFFILFMTTQIKA. 3 cysteine pairs are disulfide-bonded: Cys-27-Cys-42, Cys-34-Cys-47, and Cys-41-Cys-55.

In terms of tissue distribution, abundantly expressed by teratocytes, which are extra-embryonic cells released by parasitoid wasps into their hosts during larval eclosion.

The protein localises to the secreted. This endoparasitoid wasp peptide has immununosuppressive and insecticidal activities. Suppress cellular immunity which is detectable as a reduction of hemocyte encapsulation in the host. In vivo, ingestion of this peptide (probably at excessive doses) increases larval mortality and reduces leaf consumption in both lepidopteran species D.saccharalis and S.frugiperda, which are permissive and non-permissive hosts for C.flavipes, respectively. The protein is Teratocyte protein CftICK-III of Cotesia flavipes (Parasitic wasp).